The sequence spans 467 residues: Dimethylamine methyltransferase MtbB3 (467 aa).

A non-standard amino acid (pyrrolysine) is located at residue Pyl356.

Belongs to the dimethylamine methyltransferase family.

It carries out the reaction Co(I)-[dimethylamine-specific corrinoid protein] + dimethylamine + H(+) = methyl-Co(III)-[dimethylamine-specific corrinoid protein] + methylamine. It participates in one-carbon metabolism; methanogenesis from dimethylamine. Functionally, catalyzes the transfer of a methyl group from dimethylamine to the corrinoid cofactor of MtbC. This is Dimethylamine methyltransferase MtbB3 (mtbB3) from Methanosarcina acetivorans (strain ATCC 35395 / DSM 2834 / JCM 12185 / C2A).